A 115-amino-acid chain; its full sequence is Large ribosomal subunit protein bL19 (115 aa).

The protein belongs to the bacterial ribosomal protein bL19 family.

Its function is as follows. This protein is located at the 30S-50S ribosomal subunit interface and may play a role in the structure and function of the aminoacyl-tRNA binding site. This is Large ribosomal subunit protein bL19 from Lactobacillus acidophilus (strain ATCC 700396 / NCK56 / N2 / NCFM).